The primary structure comprises 923 residues: RNA polymerase-associated protein RapA (923 aa).

Positions 162 to 332 (EVGNRVNPRV…FARLRLLDPE (171 aa)) constitute a Helicase ATP-binding domain. Position 175-182 (175-182 (DEVGLGKT)) interacts with ATP. A DEAH box motif is present at residues 278-281 (DEAH). Positions 443 to 597 (KIDWLIDFLK…TCPMGMALFS (155 aa)) constitute a Helicase C-terminal domain.

The protein belongs to the SNF2/RAD54 helicase family. RapA subfamily. In terms of assembly, interacts with the RNAP. Has a higher affinity for the core RNAP than for the holoenzyme. Its ATPase activity is stimulated by binding to RNAP.

Functionally, transcription regulator that activates transcription by stimulating RNA polymerase (RNAP) recycling in case of stress conditions such as supercoiled DNA or high salt concentrations. Probably acts by releasing the RNAP, when it is trapped or immobilized on tightly supercoiled DNA. Does not activate transcription on linear DNA. Probably not involved in DNA repair. The chain is RNA polymerase-associated protein RapA from Haemophilus influenzae (strain PittEE).